The following is a 180-amino-acid chain: NAD(P)H-quinone oxidoreductase subunit I, chloroplastic (180 aa).

2 consecutive 4Fe-4S ferredoxin-type domains span residues Gly55 to Arg84 and Leu95 to Glu124. Cys64, Cys67, Cys70, Cys74, Cys104, Cys107, Cys110, and Cys114 together coordinate [4Fe-4S] cluster.

Belongs to the complex I 23 kDa subunit family. NDH is composed of at least 16 different subunits, 5 of which are encoded in the nucleus. [4Fe-4S] cluster serves as cofactor.

The protein resides in the plastid. It is found in the chloroplast thylakoid membrane. The enzyme catalyses a plastoquinone + NADH + (n+1) H(+)(in) = a plastoquinol + NAD(+) + n H(+)(out). It carries out the reaction a plastoquinone + NADPH + (n+1) H(+)(in) = a plastoquinol + NADP(+) + n H(+)(out). In terms of biological role, NDH shuttles electrons from NAD(P)H:plastoquinone, via FMN and iron-sulfur (Fe-S) centers, to quinones in the photosynthetic chain and possibly in a chloroplast respiratory chain. The immediate electron acceptor for the enzyme in this species is believed to be plastoquinone. Couples the redox reaction to proton translocation, and thus conserves the redox energy in a proton gradient. The chain is NAD(P)H-quinone oxidoreductase subunit I, chloroplastic from Triticum aestivum (Wheat).